The chain runs to 450 residues: Tubulin beta-3 chain (450 aa).

An MREI motif motif is present at residues 1 to 4 (MREI). GDP-binding residues include glycine 10, glutamine 11, cysteine 12, and glutamine 15. Glutamine 11 is a GTP binding site. Glutamate 69 serves as a coordination point for GTP. Glutamate 69 provides a ligand contact to Mg(2+). 5 residues coordinate GDP: asparagine 99, serine 138, glycine 142, threonine 143, and glycine 144. 4 residues coordinate GTP: serine 138, glycine 142, threonine 143, and glycine 144. The residue at position 172 (serine 172) is a Phosphoserine; by CDK1. GDP-binding residues include aspartate 177, asparagine 204, tyrosine 222, and asparagine 226. Asparagine 204 is a binding site for GTP. Asparagine 226 is a GTP binding site. Positions 425 to 450 (YQDATAEEEGEMYEDDEEESEAQGPK) are disordered. Acidic residues predominate over residues 429–450 (TAEEEGEMYEDDEEESEAQGPK). Glutamate 438 is modified (5-glutamyl polyglutamate). Serine 444 carries the post-translational modification Phosphoserine.

This sequence belongs to the tubulin family. Heterodimer of alpha- and beta-tubulin. A typical microtubule is a hollow water-filled tube with an outer diameter of 25 nm and an inner diameter of 15 nM. Alpha-beta heterodimers associate head-to-tail to form protofilaments running lengthwise along the microtubule wall with the beta-tubulin subunit facing the microtubule plus end conferring a structural polarity. Microtubules usually have 13 protofilaments but different protofilament numbers can be found in some organisms and specialized cells. Interacts with gamma-tubulin; the interaction allows microtubules to nucleate from the gamma-tubulin ring complex (gTuRC). Interacts with UNC5C (via cytoplasmic domain); this interaction is decreased by NTN1/Netrin-1. Interacts with NLRP5/MATER at cytoskeleton microtubules. Interacts with DPYSL5. Interacts with CFAP61. Mg(2+) serves as cofactor. Post-translationally, some glutamate residues at the C-terminus are polyglutamylated, resulting in polyglutamate chains on the gamma-carboxyl group. Polyglutamylation plays a key role in microtubule severing by spastin (SPAST). SPAST preferentially recognizes and acts on microtubules decorated with short polyglutamate tails: severing activity by SPAST increases as the number of glutamates per tubulin rises from one to eight, but decreases beyond this glutamylation threshold. Glutamylation is also involved in cilia motility. Some glutamate residues at the C-terminus are monoglycylated but not polyglycylated due to the absence of functional TTLL10 in human. Monoglycylation is mainly limited to tubulin incorporated into cilia and flagella axonemes, which is required for their stability and maintenance. Flagella glycylation controls sperm motility. Both polyglutamylation and monoglycylation can coexist on the same protein on adjacent residues, and lowering glycylation levels increases polyglutamylation, and reciprocally. In terms of processing, phosphorylated on Ser-172 by CDK1 during the cell cycle, from metaphase to telophase, but not in interphase. This phosphorylation inhibits tubulin incorporation into microtubules. Expression is primarily restricted to central and peripheral nervous system. Greatly increased expression in most cancerous tissues.

The protein localises to the cytoplasm. It localises to the cytoskeleton. It is found in the cell projection. The protein resides in the growth cone. Its subcellular location is the lamellipodium. The protein localises to the filopodium. Its function is as follows. Tubulin is the major constituent of microtubules, protein filaments consisting of alpha- and beta-tubulin heterodimers. Microtubules grow by the addition of GTP-tubulin dimers to the microtubule end, where a stabilizing cap forms. Below the cap, alpha-beta tubulin heterodimers are in GDP-bound state, owing to GTPase activity of alpha-tubulin. TUBB3 plays a critical role in proper axon guidance and maintenance. Binding of NTN1/Netrin-1 to its receptor UNC5C might cause dissociation of UNC5C from polymerized TUBB3 in microtubules and thereby lead to increased microtubule dynamics and axon repulsion. Plays a role in dorsal root ganglion axon projection towards the spinal cord. This Homo sapiens (Human) protein is Tubulin beta-3 chain (TUBB3).